The following is a 1001-amino-acid chain: MDVTEVPWRRLPQFSVSSRASWLVSSGFPLSSYMFSHVERGKTFRLTLCFGVSRLRPRSAIPLRFLLSVFSEQPPSRLKGLCEVVWIVEADLAANEHLYVTGDPSTLGSWEPDCAISMYPTENDNEWEAKVKIASGVNFRYNYLLKAGYGSSSDVIWRPGPQFSLSVPSSVNQDRKIIIRDSWMSMSISSKSQESYGWGSWIDDAYLFPNCVTPAQSEDECTSADSAIEVPRTHLNDKQVGAESFLCDELAAFSSENSNLSALFSDNYQPIEEPWLIQESITLQHERNMQTDSEQDVESCDDNENNLNTDEQNHQLTETLLPDGGFFQSESIATTILINSSICTVQRIAVLEGGKLVELLLEPVKTNVQCDSVYLGVITKFVPHMGGAFVNIGSARHSFMDIKSNREPFIFPPFCDGSKKQAADGSPILSMNDIPAPHEIEHASYDFEASSLLDIDSNDPGESFHDDDDEHENDEYHVSDHLAGLVNGTVVNHGAVEVGSENGHIPMERGHSADSLDSNASVAKASKVMSSKDNKWIQVRKGTKIIVQVVKEGLGTKGPTLTAYPKLRSRFWVLLTRCKRIGVSKKISGVERTRLKVIAKTLQPQGFGLTVRTVAAGHSLEELQKDLDGLLLTWKNITDEAKSAALAADEGVEGAIPALLHRAMGQTLSVVQDYFNDKVEKMVVDSPRTYHEVTHYLQDMAPDLCNRVELHDKGIPLFDLYEIEEEIEGILSKRVPLSNGGSLVIEQTEALVSIDVNGGHGMFGQGNSQEKAILEVNLAAARQIAREIRLRDIGGIIVVDFIDMADESNKRLVYEEVKKAVERDRSLVKVSELSRHGLMEITRKRVRPSVTFMISEPCSCCHATGRVEALETTFSKIEQEICRQLAKMEKRGDLENPKSWPRFILRVDSHMSSFLTTGKRTRLAILSSSLKVWILLKVARHFTRGTFEVKPFMDEKTVNERQHQVAISLLKKADAIADSSGKKKLTLIPIKKEKTSGKQRR.

The N-terminal 48 residues, 1 to 48, are a transit peptide targeting the chloroplast; that stretch reads MDVTEVPWRRLPQFSVSSRASWLVSSGFPLSSYMFSHVERGKTFRLTL. The CBM20 domain maps to 76-185; the sequence is SRLKGLCEVV…KIIIRDSWMS (110 aa). Aspartate 755 contributes to the Mg(2+) binding site. A coiled-coil region spans residues 769–789; the sequence is QEKAILEVNLAAARQIAREIR. A Mg(2+)-binding site is contributed by aspartate 800. Zn(2+) contacts are provided by cysteine 858 and cysteine 861.

Belongs to the RNase E/G family. As to quaternary structure, part of a chloroplastic degradosome-like complex. Interacts with RHON1. A homotetramer formed by a dimer of dimers. The cofactor is Mg(2+). It depends on Zn(2+) as a cofactor. Expressed in cotyledons, rosette and cauline leaves.

The protein localises to the plastid. It is found in the chloroplast stroma. In terms of biological role, involved in intercistronic processing of primary transcripts from chloroplast operons. The endonucleolytic activity of the enzyme depends on the number of phosphates at the 5' end, is inhibited by structured RNA, and preferentially cleaves A/U-rich sequences. This Arabidopsis thaliana (Mouse-ear cress) protein is Ribonuclease E/G-like protein, chloroplastic (RNE).